Reading from the N-terminus, the 426-residue chain is Histidine--tRNA ligase (426 aa).

The protein belongs to the class-II aminoacyl-tRNA synthetase family. Homodimer.

Its subcellular location is the cytoplasm. It carries out the reaction tRNA(His) + L-histidine + ATP = L-histidyl-tRNA(His) + AMP + diphosphate + H(+). This chain is Histidine--tRNA ligase, found in Picosynechococcus sp. (strain ATCC 27264 / PCC 7002 / PR-6) (Agmenellum quadruplicatum).